Consider the following 628-residue polypeptide: Chaperone protein HtpG (628 aa).

The segment at 1–337 (MSEKKYTFET…SADLPLNVSR (337 aa)) is a; substrate-binding. The tract at residues 338 to 554 (EILQHNKVID…DYGMSLHMQK (217 aa)) is b. Residues 555–628 (MMEEAGQGFM…FVKLVNKYIR (74 aa)) form a c region.

The protein belongs to the heat shock protein 90 family. Homodimer.

Its subcellular location is the cytoplasm. In terms of biological role, molecular chaperone. Has ATPase activity. The chain is Chaperone protein HtpG from Francisella tularensis subsp. novicida (strain U112).